The primary structure comprises 572 residues: Enolase 4 (572 aa).

Residues 181–204 (IEPVPSPVTSPALGKKKGSGKGKK) are disordered. Over residues 194 to 204 (GKKKGSGKGKK) the composition is skewed to basic residues. Glu288 is a substrate binding site. Lys468 (proton acceptor) is an active-site residue. Lys519 is a substrate binding site.

This sequence belongs to the enolase family.

The enzyme catalyses (2R)-2-phosphoglycerate = phosphoenolpyruvate + H2O. It participates in carbohydrate degradation; glycolysis; pyruvate from D-glyceraldehyde 3-phosphate: step 4/5. The polypeptide is Enolase 4 (eno4) (Xenopus laevis (African clawed frog)).